The primary structure comprises 355 residues: Methyltransferase FUS9 (355 aa).

Residues tyrosine 18, asparagine 63, aspartate 86, serine 123, and phenylalanine 124 each contribute to the S-adenosyl-L-homocysteine site. Phenylalanine 231 is a binding site for Mg(2+).

The protein belongs to the methyltransferase superfamily. Type-7 methyltransferase family. Mg(2+) is required as a cofactor.

Its pathway is mycotoxin biosynthesis. Methyltransferase; part of the gene cluster that mediates the biosynthesis of the mycotoxin fusarin C. Within the cluster, FUS1, FUS2, FUS8 and FUS9 are sufficient for fusarin production. The roles of the other FUS members are yet undetermined. The fusarin C synthetase FUS1 is responsible for the condensation of one acetyl-coenzyme A (CoA) unit with six malonyl-CoA units and the amide linkage of the arising heptaketide and homoserine, subsequently releasing the first intermediate, prefusarin, as an alcohol with an open ring structure. The cytochrome P450 monooxygenase FUS8 participates in multiple oxidation processes at carbon C-20 and is able to use the FUS1 product as substrate, resulting in formation of 20-hydroxy-prefusarin. This reaction seems to be essential before the 2-pyrrolidone ring closure can be catalyzed by FUS2, generating 20-hydroxy-fusarin. FUS8 is able to further oxidizes carbon C-20 after ring closure, resulting in the formation of carboxy-fusarin C. As the last step, FUS9 methylates the hydroxyl group at C-21 to generate fusarin C. Fusarin C can then rearrange to epi-fusarin C, the (z)-isomers, and fusarin A and fusarin D. The protein is Methyltransferase FUS9 of Gibberella fujikuroi (strain CBS 195.34 / IMI 58289 / NRRL A-6831) (Bakanae and foot rot disease fungus).